The chain runs to 885 residues: Protein PTHB1 (885 aa).

The seven-bladed beta-propeller stretch occupies residues 1-406 (MSLFKARDWW…LQGVWPLTEQ (406 aa)). The interval 684–764 (RDKTPAPLQH…FLPLQEDTQE (81 aa)) is interaction with LZTL1.

In terms of assembly, part of BBSome complex, that contains BBS1, BBS2, BBS4, BBS5, BBS7, BBS8/TTC8, BBS9 and BBIP10. Interacts with LZTL1; the interaction mediates the association of LZTL1 with the BBsome complex and regulates BBSome ciliary trafficking.

It localises to the cell projection. Its subcellular location is the cilium membrane. It is found in the cytoplasm. The protein resides in the cytoskeleton. The protein localises to the microtubule organizing center. It localises to the centrosome. Its subcellular location is the centriolar satellite. The BBSome complex is thought to function as a coat complex required for sorting of specific membrane proteins to the primary cilia. The BBSome complex is required for ciliogenesis but is dispensable for centriolar satellite function. This ciliogenic function is mediated in part by the Rab8 GDP/GTP exchange factor, which localizes to the basal body and contacts the BBSome. Rab8(GTP) enters the primary cilium and promotes extension of the ciliary membrane. Firstly the BBSome associates with the ciliary membrane and binds to RAB3IP/Rabin8, the guanosyl exchange factor (GEF) for Rab8 and then the Rab8-GTP localizes to the cilium and promotes docking and fusion of carrier vesicles to the base of the ciliary membrane. Required for proper BBSome complex assembly and its ciliary localization. This Mus musculus (Mouse) protein is Protein PTHB1 (Bbs9).